Here is a 453-residue protein sequence, read N- to C-terminus: MNIVILAAGTGKRMRSALPKVLHPLAGRPLLSHVIATARTLQPSRLVVVVGHGAEQVQAAVAAPDVQFAVQAEQLGTGHAVRQALPLLDPAQPTLVLYGDVPLTRATTLKRLVDAAHDGRYGILTVTLDDPTGYGRIVRDAAGFVTRIVEQKDASPEQLKIAEINTGIIVTPTAQLSMWLGALKNENAQGEYYLTDVVELAIEAGFEIVTTQPDDDWETLGVNSKAQLAELERIHQRNVADALLVEGVTLADPARVDVRGTLRCGRDVSIDVNCVFEGDVTLADDVTVGPNCVIRNASIGAGTRIDAFTHIDGAQLGANTVIGPYARLRPGAQLADEAHVGNFVEVKNAVIGHGSKANHLTYIGDADIGARVNIGAGTITCNYDGANKFRTVIEDDVFVGSDTQLVAPVRVGRGVTIAAGTTVWKDVAEGTLALNEKTQTAKSGYVRPVKKKS.

Positions Met1–Lys225 are pyrophosphorylase. UDP-N-acetyl-alpha-D-glucosamine-binding positions include Leu6–Gly9, Lys20, Gln71, Gly76–Thr77, Tyr98–Asp100, Gly135, Glu150, Asn165, and Asn223. Asp100 lines the Mg(2+) pocket. Position 223 (Asn223) interacts with Mg(2+). The linker stretch occupies residues Ala226 to Glu246. The N-acetyltransferase stretch occupies residues Gly247 to Ser453. UDP-N-acetyl-alpha-D-glucosamine is bound by residues Arg329 and Lys347. His359 functions as the Proton acceptor in the catalytic mechanism. Positions 362 and 373 each coordinate UDP-N-acetyl-alpha-D-glucosamine. Acetyl-CoA is bound by residues Ala376, Asn382–Tyr383, Ser401, and Ala419.

It in the N-terminal section; belongs to the N-acetylglucosamine-1-phosphate uridyltransferase family. This sequence in the C-terminal section; belongs to the transferase hexapeptide repeat family. As to quaternary structure, homotrimer. It depends on Mg(2+) as a cofactor.

Its subcellular location is the cytoplasm. It carries out the reaction alpha-D-glucosamine 1-phosphate + acetyl-CoA = N-acetyl-alpha-D-glucosamine 1-phosphate + CoA + H(+). It catalyses the reaction N-acetyl-alpha-D-glucosamine 1-phosphate + UTP + H(+) = UDP-N-acetyl-alpha-D-glucosamine + diphosphate. Its pathway is nucleotide-sugar biosynthesis; UDP-N-acetyl-alpha-D-glucosamine biosynthesis; N-acetyl-alpha-D-glucosamine 1-phosphate from alpha-D-glucosamine 6-phosphate (route II): step 2/2. It participates in nucleotide-sugar biosynthesis; UDP-N-acetyl-alpha-D-glucosamine biosynthesis; UDP-N-acetyl-alpha-D-glucosamine from N-acetyl-alpha-D-glucosamine 1-phosphate: step 1/1. It functions in the pathway bacterial outer membrane biogenesis; LPS lipid A biosynthesis. In terms of biological role, catalyzes the last two sequential reactions in the de novo biosynthetic pathway for UDP-N-acetylglucosamine (UDP-GlcNAc). The C-terminal domain catalyzes the transfer of acetyl group from acetyl coenzyme A to glucosamine-1-phosphate (GlcN-1-P) to produce N-acetylglucosamine-1-phosphate (GlcNAc-1-P), which is converted into UDP-GlcNAc by the transfer of uridine 5-monophosphate (from uridine 5-triphosphate), a reaction catalyzed by the N-terminal domain. The chain is Bifunctional protein GlmU from Burkholderia vietnamiensis (strain G4 / LMG 22486) (Burkholderia cepacia (strain R1808)).